The following is a 326-amino-acid chain: Lipoyl synthase (326 aa).

[4Fe-4S] cluster contacts are provided by Cys-68, Cys-73, Cys-79, Cys-94, Cys-98, Cys-101, and Ser-308. The 218-residue stretch at 80-297 (FNHGTATFMI…KDVAMGLGFS (218 aa)) folds into the Radical SAM core domain.

Belongs to the radical SAM superfamily. Lipoyl synthase family. The cofactor is [4Fe-4S] cluster.

It localises to the cytoplasm. The enzyme catalyses [[Fe-S] cluster scaffold protein carrying a second [4Fe-4S](2+) cluster] + N(6)-octanoyl-L-lysyl-[protein] + 2 oxidized [2Fe-2S]-[ferredoxin] + 2 S-adenosyl-L-methionine + 4 H(+) = [[Fe-S] cluster scaffold protein] + N(6)-[(R)-dihydrolipoyl]-L-lysyl-[protein] + 4 Fe(3+) + 2 hydrogen sulfide + 2 5'-deoxyadenosine + 2 L-methionine + 2 reduced [2Fe-2S]-[ferredoxin]. Its pathway is protein modification; protein lipoylation via endogenous pathway; protein N(6)-(lipoyl)lysine from octanoyl-[acyl-carrier-protein]: step 2/2. Functionally, catalyzes the radical-mediated insertion of two sulfur atoms into the C-6 and C-8 positions of the octanoyl moiety bound to the lipoyl domains of lipoate-dependent enzymes, thereby converting the octanoylated domains into lipoylated derivatives. The sequence is that of Lipoyl synthase from Aeromonas salmonicida (strain A449).